The sequence spans 804 residues: Phenylalanine--tRNA ligase beta subunit (804 aa).

Residues 38–148 (RSSLKGFVIA…EDAPIGGLFA (111 aa)) form the tRNA-binding domain. Positions 401–476 (PEIKQIAFPF…RIYGLDKIEP (76 aa)) constitute a B5 domain. 4 residues coordinate Mg(2+): Asp454, Asp460, Glu463, and Glu464. The FDX-ACB domain occupies 710 to 803 (SPFQMVRRDF…VTKATGAYLR (94 aa)).

This sequence belongs to the phenylalanyl-tRNA synthetase beta subunit family. Type 1 subfamily. In terms of assembly, tetramer of two alpha and two beta subunits. Mg(2+) is required as a cofactor.

The protein resides in the cytoplasm. The catalysed reaction is tRNA(Phe) + L-phenylalanine + ATP = L-phenylalanyl-tRNA(Phe) + AMP + diphosphate + H(+). The sequence is that of Phenylalanine--tRNA ligase beta subunit from Bartonella quintana (strain Toulouse) (Rochalimaea quintana).